We begin with the raw amino-acid sequence, 392 residues long: 8-amino-7-oxononanoate synthase (392 aa).

108 to 109 (GF) is a pyridoxal 5'-phosphate binding site. H133 contributes to the substrate binding site. Residues S180, 205–208 (DDAH), and 236–239 (TLSK) contribute to the pyridoxal 5'-phosphate site. Position 239 is an N6-(pyridoxal phosphate)lysine (K239). Residue T353 coordinates substrate.

This sequence belongs to the class-II pyridoxal-phosphate-dependent aminotransferase family. BioF subfamily. As to quaternary structure, homodimer. The cofactor is pyridoxal 5'-phosphate.

The catalysed reaction is 6-carboxyhexanoyl-[ACP] + L-alanine + H(+) = (8S)-8-amino-7-oxononanoate + holo-[ACP] + CO2. It functions in the pathway cofactor biosynthesis; biotin biosynthesis. Its function is as follows. Catalyzes the decarboxylative condensation of pimeloyl-[acyl-carrier protein] and L-alanine to produce 8-amino-7-oxononanoate (AON), [acyl-carrier protein], and carbon dioxide. This is 8-amino-7-oxononanoate synthase from Bacillus pumilus (strain SAFR-032).